The following is an 876-amino-acid chain: Nitrogen regulatory protein areA (876 aa).

Residues 1-11 (MSGLTLGGGSG) are compositionally biased toward gly residues. 6 disordered regions span residues 1–65 (MSGL…PTDS), 137–159 (QERE…PGMS), 192–248 (IPFS…ESEF), 393–413 (FSPP…AYDG), 451–498 (YMYN…PNEF), and 573–672 (SADM…GPTT). Polar residues-rich tracts occupy residues 198–211 (DHPS…SEAT), 399–408 (GYQSTASTPQ), and 455–480 (QGGS…QSPG). Over residues 602–611 (VRNRDQDPRR) the composition is skewed to basic and acidic residues. Residues 615–640 (ARTSSTPNTAQLLRQSMQNQSSHTSP) are compositionally biased toward polar residues. A GATA-type zinc finger spans residues 673-697 (CTNCFTQTTPLWRRNPEGQPLCNAC). A DNA-binding region (H-T-H motif) is located at residues 721–742 (NRNSANSLAVGSSRVSKKSARK). 2 stretches are compositionally biased toward polar residues: residues 724 to 734 (SANSLAVGSSR) and 742 to 766 (KNSV…TSES). The interval 724 to 856 (SANSLAVGSS…MPPAAVNPAN (133 aa)) is disordered. Composition is skewed to low complexity over residues 782–798 (PIAA…TTSP) and 828–855 (SPSS…VNPA).

Interacts with nmrA.

It localises to the nucleus. Its function is as follows. Transcription activator that binds the consensus DNA element 5'-CGATAG-3' and mediates nitrogen metabolite repression. Activates the transcription of uapA. This Emericella nidulans (strain FGSC A4 / ATCC 38163 / CBS 112.46 / NRRL 194 / M139) (Aspergillus nidulans) protein is Nitrogen regulatory protein areA (areA).